Here is a 443-residue protein sequence, read N- to C-terminus: CBL-interacting protein kinase 29 (443 aa).

Residues 32 to 292 (YELGGLLGRG…TEEIITHPWF (261 aa)) enclose the Protein kinase domain. ATP is bound by residues 38–46 (LGRGASAKV) and Lys-61. Asp-164 serves as the catalytic Proton acceptor. The activation loop stretch occupies residues 182-207 (DFGLGAVADGALHHTLCGTPAYVAPE). Positions 313–347 (AKFKTEFKEDDMARDMTAFDILACSPGSDLSGLFG) constitute an NAF domain. The segment at 350-379 (PGKERVFVGEPAAAVLSRVEEAGKKEGYMV) is PPI.

The protein belongs to the protein kinase superfamily. CAMK Ser/Thr protein kinase family. SNF1 subfamily. It depends on Mn(2+) as a cofactor.

The catalysed reaction is L-seryl-[protein] + ATP = O-phospho-L-seryl-[protein] + ADP + H(+). It carries out the reaction L-threonyl-[protein] + ATP = O-phospho-L-threonyl-[protein] + ADP + H(+). Its function is as follows. CIPK serine-threonine protein kinases interact with CBL proteins. Binding of a CBL protein to the regulatory NAF domain of CIPK protein lead to the activation of the kinase in a calcium-dependent manner. The chain is CBL-interacting protein kinase 29 (CIPK29) from Oryza sativa subsp. japonica (Rice).